Reading from the N-terminus, the 239-residue chain is Geranylgeranylglyceryl phosphate synthase (239 aa).

Mg(2+) is bound by residues aspartate 18 and serine 45. Residues 166 to 172 (YLEAGSG), 197 to 198 (GG), and 219 to 220 (GT) each bind sn-glycerol 1-phosphate.

Belongs to the GGGP/HepGP synthase family. Group II subfamily. It depends on Mg(2+) as a cofactor.

It is found in the cytoplasm. It carries out the reaction sn-glycerol 1-phosphate + (2E,6E,10E)-geranylgeranyl diphosphate = sn-3-O-(geranylgeranyl)glycerol 1-phosphate + diphosphate. The protein operates within membrane lipid metabolism; glycerophospholipid metabolism. Functionally, prenyltransferase that catalyzes the transfer of the geranylgeranyl moiety of geranylgeranyl diphosphate (GGPP) to the C3 hydroxyl of sn-glycerol-1-phosphate (G1P). This reaction is the first ether-bond-formation step in the biosynthesis of archaeal membrane lipids. The protein is Geranylgeranylglyceryl phosphate synthase of Pyrobaculum arsenaticum (strain DSM 13514 / JCM 11321 / PZ6).